The sequence spans 119 residues: uncharacterized protein (119 aa).

Residues 1-112 (MVFNMRSTRG…FISSCLLLVL (112 aa)) enclose the ABC transmembrane type-1 domain. Transmembrane regions (helical) follow at residues 51 to 73 (VLAW…ATRF) and 91 to 111 (FEIA…LLLV).

This sequence belongs to the binding-protein-dependent transport system permease family. CysTW subfamily.

It localises to the cell membrane. This is an uncharacterized protein from Haemophilus influenzae (strain ATCC 51907 / DSM 11121 / KW20 / Rd).